A 236-amino-acid polypeptide reads, in one-letter code: Ribitol-5-phosphate cytidylyltransferase (236 aa).

CTP is bound by residues L7–G10 and G80–T86.

This sequence belongs to the IspD/TarI cytidylyltransferase family. TarI subfamily.

It catalyses the reaction D-ribitol 5-phosphate + CTP + H(+) = CDP-L-ribitol + diphosphate. It functions in the pathway cell wall biogenesis; poly(ribitol phosphate) teichoic acid biosynthesis. In terms of biological role, catalyzes the transfer of the cytidylyl group of CTP to D-ribitol 5-phosphate. This Listeria monocytogenes serovar 1/2a (strain ATCC BAA-679 / EGD-e) protein is Ribitol-5-phosphate cytidylyltransferase.